We begin with the raw amino-acid sequence, 856 residues long: MVNTPVPGLGSCASRGLIAAPASIIRSRPGCDHAGECIVVCVGVFRKDWVMTSPKQRPPLVPGVAQTFPVLPLRDIVVFPHMIVPLFVGREKSIRALEEVMRGDTYILLATQENASDDDPATDAIYRVGTLATVLQLLKLPDGTVKVLVEGVTRAQVVQYTDRADLYEAEAISLPDEVGDVVEAEALARSVVNEFENYVKLNKKVSPEVVGVVGQIEDHAKLADTIASHLAVKIPEKQAVLETVKVADRLEKVLGLMESEISVLQVEKRIRTRVKRQMEKTQREYYLNEQMKAIQKELGDEDGRDDLQELEDRIKRTKLTKEAREKATHELKKLRQMSPMSAEATVVRNYLDWLLSIPWGIKSKVKKDLPFAQSVLDSDHYGLDKVKERIVEYLAVQSRANKLAGPILCLVGPPGVGKTSLGRSIAKATGREFVRVSLGGVRDEAEIRGHRRTYIGSMPGKIIQSMRKAKKSNPLFLLDEIDKMGADFRGDPSAALLEVLDPEQNPTFNDHYLEVDYDLSNVMFVTTANTLNIPPALLDRMEVIRIAGYTEDEKAEISRKHLIPNALQKHGLSAKEWSIDDAALLQVIRRYTREAGVRNLEREISTLARKAVKELVISKKKSVKVTAKNLETFLGVPRFRYGEIEREDQVGVVTGLAWTEVGGELLTIEGVMMPGKGRMTVTGNLKEVMKESISAAASYVRSRSVDFGIEPPLFERRDIHVHVPEGATPKDGPSAGVAMATTIVSVLTGIPVRRDVAMTGEITLRGRVLPIGGLKEKLLAALRGGIKKVLIPEENAKDLADIPDNVKNALEIIPVSRMDEVLHHALLRHPEPISWTEQPVSGAVVPDEDAAGVVAH.

A Lon N-terminal domain is found at 68-261 (FPVLPLRDIV…KVLGLMESEI (194 aa)). 412 to 419 (GPPGVGKT) is an ATP binding site. Residues 647-828 (EDQVGVVTGL…DEVLHHALLR (182 aa)) enclose the Lon proteolytic domain. Active-site residues include S734 and K777.

It belongs to the peptidase S16 family. In terms of assembly, homohexamer. Organized in a ring with a central cavity.

Its subcellular location is the cytoplasm. It carries out the reaction Hydrolysis of proteins in presence of ATP.. ATP-dependent serine protease that mediates the selective degradation of mutant and abnormal proteins as well as certain short-lived regulatory proteins. Required for cellular homeostasis and for survival from DNA damage and developmental changes induced by stress. Degrades polypeptides processively to yield small peptide fragments that are 5 to 10 amino acids long. Binds to DNA in a double-stranded, site-specific manner. This is Lon protease from Azorhizobium caulinodans (strain ATCC 43989 / DSM 5975 / JCM 20966 / LMG 6465 / NBRC 14845 / NCIMB 13405 / ORS 571).